We begin with the raw amino-acid sequence, 337 residues long: MQKSLITKWLCISCIMVIATIVIGGITRLTGSGLSIVEWRPVTGILPPFSFESWQAEFAKYKAFPEYNSVNYGITLSQFKFIYLLEFIHRLLGRITALIYIVPLIYFYFKDVIKNRDMLPYIIALWLFCVQGFMGWYMVKSGLLNSPYVSHCRLAFHLIIAVIIYHILFYQLIKNRCDILLIPSQTDLKLPLIFSGIAITVVYVQIFLGALVAGLDAGLIYNSFPLMDYSFIPMEIKDNFFDLKNWYDPVFIQFIHRLGGYSVFLVVVVLIICLLKIEHPKLNKIAYFLMIALLMQVSTGIITLLYSVPIIIASIHQLFAVILLSIIIWCCFLIKSS.

Transmembrane regions (helical) follow at residues 6–26 (ITKW…IGGI), 87–107 (FIHR…LIYF), 119–139 (LPYI…WYMV), 154–174 (LAFH…QLIK), and 192–212 (LIFS…GALV). His256 contacts heme. 3 consecutive transmembrane segments (helical) span residues 258–278 (LGGY…LKIE), 285–305 (IAYF…ITLL), and 308–328 (VPII…SIII). His316 contacts heme.

This sequence belongs to the COX15/CtaA family. Type 2 subfamily. As to quaternary structure, interacts with CtaB. The cofactor is heme b.

The protein localises to the cell membrane. It carries out the reaction Fe(II)-heme o + 2 A + H2O = Fe(II)-heme a + 2 AH2. It participates in porphyrin-containing compound metabolism; heme A biosynthesis; heme A from heme O: step 1/1. Its function is as follows. Catalyzes the conversion of heme O to heme A by two successive hydroxylations of the methyl group at C8. The first hydroxylation forms heme I, the second hydroxylation results in an unstable dihydroxymethyl group, which spontaneously dehydrates, resulting in the formyl group of heme A. The polypeptide is Heme A synthase (Rickettsia massiliae (strain Mtu5)).